The chain runs to 447 residues: C4-dicarboxylate transport protein (447 aa).

8 helical membrane passes run 19 to 39 (ILYVQVLVAIVAGVLLGHFYP), 55 to 75 (LVKMIIAPVIFLTVVTGIAGL), 90 to 110 (IYFLSFSTLALIIGMIVANVV), 155 to 175 (AFASGDILQVLFFAVLFGIAL), 199 to 219 (LVAIVMKAAPLGAFGAMAFTI), 232 to 252 (MLVGTFYLTSGLFVFVVLGLV), 343 to 363 (LLLVAMLSSKGAAGITGAGFI), and 366 to 386 (AATLSVVPSVPVAGMALILGV).

This sequence belongs to the dicarboxylate/amino acid:cation symporter (DAACS) (TC 2.A.23) family.

The protein resides in the cell inner membrane. In terms of biological role, responsible for the transport of dicarboxylates such as succinate, fumarate, and malate from the periplasm across the membrane. The protein is C4-dicarboxylate transport protein of Rhodospirillum rubrum (strain ATCC 11170 / ATH 1.1.1 / DSM 467 / LMG 4362 / NCIMB 8255 / S1).